The sequence spans 72 residues: Conotoxin LvVIA (72 aa).

A signal peptide spans 1–17; it reads VLIIAVLFLTASELVTA. A propeptide spanning residues 18-41 is cleaved from the precursor; the sequence is DYTRDKWQYRAASLRDAMRNFRDT. Disulfide bonds link Cys-44/Cys-58, Cys-51/Cys-63, and Cys-57/Cys-70.

This sequence belongs to the conotoxin O1 superfamily. Expressed by the venom duct.

It is found in the secreted. The protein is Conotoxin LvVIA of Conus lividus (Livid cone).